Reading from the N-terminus, the 1261-residue chain is Mediator of RNA polymerase II transcription subunit 14 (1261 aa).

Over residues 1 to 11 the composition is skewed to basic and acidic residues; it reads MPNGKQQHEVT. 3 disordered regions span residues 1–21, 413–435, and 1193–1220; these read MPNG…EIPH, NETA…GETE, and DNDI…ENET. Positions 417–427 are enriched in acidic residues; sequence IVDDNDNDNDD. The segment covering 1205 to 1220 has biased composition (basic and acidic residues); it reads QNEKENSKTTSKENET.

The protein belongs to the Mediator complex subunit 14 family. Component of the Mediator complex.

It is found in the nucleus. In terms of biological role, component of the Mediator complex, a coactivator involved in the regulated transcription of nearly all RNA polymerase II-dependent genes. Mediator functions as a bridge to convey information from gene-specific regulatory proteins to the basal RNA polymerase II transcription machinery. Mediator is recruited to promoters by direct interactions with regulatory proteins and serves as a scaffold for the assembly of a functional preinitiation complex with RNA polymerase II and the general transcription factors. In Candida albicans (strain SC5314 / ATCC MYA-2876) (Yeast), this protein is Mediator of RNA polymerase II transcription subunit 14 (MED14).